The sequence spans 531 residues: Calcium-dependent protein kinase 21 (531 aa).

A compositionally biased stretch (basic residues) spans 1 to 10 (MGCFSSKHRK). Positions 1–62 (MGCFSSKHRK…STPSSNPVSV (62 aa)) are disordered. A lipid anchor (N-myristoyl glycine) is attached at Gly2. Positions 48-60 (IHQQISTPSSNPV) are enriched in polar residues. A Protein kinase domain is found at 80–338 (YSLGKELGRG…AAQVLEHPWI (259 aa)). ATP is bound by residues 86 to 94 (LGRGQFGIT) and Lys109. Asp204 acts as the Proton acceptor in catalysis. Ser244 carries the post-translational modification Phosphoserine. The autoinhibitory domain stretch occupies residues 343–373 (APDKPIDSAVLSRMKQFRAMNKLKKLALKVI). EF-hand domains follow at residues 380 to 415 (EEIK…LGSR), 416 to 451 (LSET…RYKL), 452 to 487 (DRDE…YGMG), and 488 to 522 (DEAS…GSTQ). 20 residues coordinate Ca(2+): Asp393, Asp395, Ser397, Thr399, Glu404, Asp429, Asp431, Asn433, Thr435, Glu440, Asp465, Asp467, Ser469, His471, Glu476, Asp500, Asp502, Asp504, Arg506, and Glu511.

The protein belongs to the protein kinase superfamily. Ser/Thr protein kinase family. CDPK subfamily. As to quaternary structure, interacts with SLAC1 and ABI1.

Its subcellular location is the cell membrane. It catalyses the reaction L-seryl-[protein] + ATP = O-phospho-L-seryl-[protein] + ADP + H(+). The catalysed reaction is L-threonyl-[protein] + ATP = O-phospho-L-threonyl-[protein] + ADP + H(+). With respect to regulation, activated by calcium. Autophosphorylation may play an important role in the regulation of the kinase activity. Functionally, may play a role in signal transduction pathways that involve calcium as a second messenger. Mediates the phosphorylation and activation of the S-type anion efflux channel SLAC1. This Arabidopsis thaliana (Mouse-ear cress) protein is Calcium-dependent protein kinase 21 (CPK21).